The following is a 160-amino-acid chain: NADH-quinone oxidoreductase subunit B (160 aa).

The [4Fe-4S] cluster site is built by C37, C38, C102, and C132.

The protein belongs to the complex I 20 kDa subunit family. As to quaternary structure, NDH-1 is composed of 14 different subunits. Subunits NuoB, C, D, E, F, and G constitute the peripheral sector of the complex. Requires [4Fe-4S] cluster as cofactor.

The protein resides in the cell membrane. It catalyses the reaction a quinone + NADH + 5 H(+)(in) = a quinol + NAD(+) + 4 H(+)(out). Functionally, NDH-1 shuttles electrons from NADH, via FMN and iron-sulfur (Fe-S) centers, to quinones in the respiratory chain. Couples the redox reaction to proton translocation (for every two electrons transferred, four hydrogen ions are translocated across the cytoplasmic membrane), and thus conserves the redox energy in a proton gradient. The protein is NADH-quinone oxidoreductase subunit B of Polynucleobacter asymbioticus (strain DSM 18221 / CIP 109841 / QLW-P1DMWA-1) (Polynucleobacter necessarius subsp. asymbioticus).